The chain runs to 456 residues: Bifunctional protein GlmU (456 aa).

The interval 1–229 (MSNSAMSVVI…LSEVEGVNNR (229 aa)) is pyrophosphorylase. Residues 11–14 (LAAG), Lys25, Gln76, 81–82 (GT), 103–105 (YGD), Gly140, Glu154, Asn169, and Asn227 each bind UDP-N-acetyl-alpha-D-glucosamine. Asp105 is a binding site for Mg(2+). A Mg(2+)-binding site is contributed by Asn227. The linker stretch occupies residues 230-250 (LQLSRLERIYQAEQSEKLLLA). The segment at 251 to 456 (GVMLLDPARF…QGWQRPVKKK (206 aa)) is N-acetyltransferase. UDP-N-acetyl-alpha-D-glucosamine is bound by residues Arg333 and Lys351. His363 acts as the Proton acceptor in catalysis. 2 residues coordinate UDP-N-acetyl-alpha-D-glucosamine: Tyr366 and Asn377. Acetyl-CoA-binding positions include Ala380, 386–387 (NY), Ser405, Ala423, and Arg440.

In the N-terminal section; belongs to the N-acetylglucosamine-1-phosphate uridyltransferase family. This sequence in the C-terminal section; belongs to the transferase hexapeptide repeat family. As to quaternary structure, homotrimer. It depends on Mg(2+) as a cofactor.

It is found in the cytoplasm. The enzyme catalyses alpha-D-glucosamine 1-phosphate + acetyl-CoA = N-acetyl-alpha-D-glucosamine 1-phosphate + CoA + H(+). It catalyses the reaction N-acetyl-alpha-D-glucosamine 1-phosphate + UTP + H(+) = UDP-N-acetyl-alpha-D-glucosamine + diphosphate. It participates in nucleotide-sugar biosynthesis; UDP-N-acetyl-alpha-D-glucosamine biosynthesis; N-acetyl-alpha-D-glucosamine 1-phosphate from alpha-D-glucosamine 6-phosphate (route II): step 2/2. It functions in the pathway nucleotide-sugar biosynthesis; UDP-N-acetyl-alpha-D-glucosamine biosynthesis; UDP-N-acetyl-alpha-D-glucosamine from N-acetyl-alpha-D-glucosamine 1-phosphate: step 1/1. The protein operates within bacterial outer membrane biogenesis; LPS lipid A biosynthesis. In terms of biological role, catalyzes the last two sequential reactions in the de novo biosynthetic pathway for UDP-N-acetylglucosamine (UDP-GlcNAc). The C-terminal domain catalyzes the transfer of acetyl group from acetyl coenzyme A to glucosamine-1-phosphate (GlcN-1-P) to produce N-acetylglucosamine-1-phosphate (GlcNAc-1-P), which is converted into UDP-GlcNAc by the transfer of uridine 5-monophosphate (from uridine 5-triphosphate), a reaction catalyzed by the N-terminal domain. This chain is Bifunctional protein GlmU, found in Serratia proteamaculans (strain 568).